The following is a 383-amino-acid chain: Putative F-box protein At4g09190 (383 aa).

The F-box domain occupies 16 to 67; the sequence is RSQREHIPLDLIVEIVSSLPAKSIVRFRSVSKLWSSIITTPDFTSSVVTRSL.

The polypeptide is Putative F-box protein At4g09190 (Arabidopsis thaliana (Mouse-ear cress)).